Consider the following 303-residue polypeptide: Polyisoprenyl-teichoic acid--peptidoglycan teichoic acid transferase TagU (303 aa).

Residues Met-1 to Lys-4 are Cytoplasmic-facing. Residues Ile-5 to Tyr-25 form a helical; Signal-anchor for type II membrane protein membrane-spanning segment. Topologically, residues Asn-26 to Lys-303 are extracellular.

Belongs to the LytR/CpsA/Psr (LCP) family.

It localises to the cell membrane. Its pathway is cell wall biogenesis. May catalyze the final step in cell wall teichoic acid biosynthesis, the transfer of the anionic cell wall polymers (APs) from their lipid-linked precursor to the cell wall peptidoglycan (PG). The chain is Polyisoprenyl-teichoic acid--peptidoglycan teichoic acid transferase TagU from Bacillus cereus (strain AH820).